The chain runs to 170 residues: ATP synthase subunit b (170 aa).

Residues 11–31 (AFTFGDAFFTLFAFAILLVLI) traverse the membrane as a helical segment.

Belongs to the ATPase B chain family. As to quaternary structure, F-type ATPases have 2 components, F(1) - the catalytic core - and F(0) - the membrane proton channel. F(1) has five subunits: alpha(3), beta(3), gamma(1), delta(1), epsilon(1). F(0) has three main subunits: a(1), b(2) and c(10-14). The alpha and beta chains form an alternating ring which encloses part of the gamma chain. F(1) is attached to F(0) by a central stalk formed by the gamma and epsilon chains, while a peripheral stalk is formed by the delta and b chains.

Its subcellular location is the cell membrane. Its function is as follows. F(1)F(0) ATP synthase produces ATP from ADP in the presence of a proton or sodium gradient. F-type ATPases consist of two structural domains, F(1) containing the extramembraneous catalytic core and F(0) containing the membrane proton channel, linked together by a central stalk and a peripheral stalk. During catalysis, ATP synthesis in the catalytic domain of F(1) is coupled via a rotary mechanism of the central stalk subunits to proton translocation. Functionally, component of the F(0) channel, it forms part of the peripheral stalk, linking F(1) to F(0). The chain is ATP synthase subunit b from Listeria innocua serovar 6a (strain ATCC BAA-680 / CLIP 11262).